The chain runs to 148 residues: Hemoglobin subunit beta (148 aa).

The region spanning residue 3 to histidine 148 is the Globin domain. Positions 64 and 93 each coordinate heme b.

The protein belongs to the globin family. As to quaternary structure, heterotetramer of two alpha chains and two beta chains. Red blood cells.

Involved in oxygen transport from gills to the various peripheral tissues. The protein is Hemoglobin subunit beta (hbb) of Silurus asotus (Amur catfish).